The primary structure comprises 175 residues: Inorganic pyrophosphatase (175 aa).

3 residues coordinate substrate: lysine 29, arginine 43, and tyrosine 55. Positions 65, 70, and 102 each coordinate Mg(2+). Tyrosine 141 contacts substrate.

Belongs to the PPase family. Homohexamer. Requires Mg(2+) as cofactor.

The protein localises to the cytoplasm. The enzyme catalyses diphosphate + H2O = 2 phosphate + H(+). Functionally, catalyzes the hydrolysis of inorganic pyrophosphate (PPi) forming two phosphate ions. The sequence is that of Inorganic pyrophosphatase from Rickettsia bellii (strain RML369-C).